Here is a 110-residue protein sequence, read N- to C-terminus: Parvalbumin alpha (110 aa).

Serine 2 bears the N-acetylserine mark. Phosphoserine is present on residues serine 2 and serine 24. 2 consecutive EF-hand domains span residues 39–74 (KSADDVKKVFHMLDKDKSGFIEEDELGFILKGFSPD) and 78–110 (LSAKETKMLMAAGDKDGDGKIGVDEFSTLVAES). Positions 52, 54, 56, 58, 60, 63, 91, 93, 95, 97, and 102 each coordinate Ca(2+).

In muscle, parvalbumin is thought to be involved in relaxation after contraction. It binds two calcium ions. The protein is Parvalbumin alpha (PVALB) of Homo sapiens (Human).